The primary structure comprises 502 residues: Glycerol kinase (502 aa).

An ADP-binding site is contributed by threonine 14. ATP-binding residues include threonine 14, threonine 15, and serine 16. Threonine 14 provides a ligand contact to sn-glycerol 3-phosphate. Position 18 (arginine 18) interacts with ADP. Arginine 84, glutamate 85, and tyrosine 136 together coordinate sn-glycerol 3-phosphate. Glycerol contacts are provided by arginine 84, glutamate 85, and tyrosine 136. Histidine 232 is subject to Phosphohistidine; by HPr. Residue aspartate 246 participates in sn-glycerol 3-phosphate binding. Glycerol contacts are provided by aspartate 246 and glutamine 247. Residues threonine 268 and glycine 311 each coordinate ADP. 4 residues coordinate ATP: threonine 268, glycine 311, glutamine 315, and glycine 412. Residues glycine 412 and asparagine 416 each coordinate ADP.

The protein belongs to the FGGY kinase family. As to quaternary structure, homotetramer and homodimer (in equilibrium). Post-translationally, the phosphoenolpyruvate-dependent sugar phosphotransferase system (PTS), including enzyme I, and histidine-containing protein (HPr) are required for the phosphorylation, which leads to the activation of the enzyme.

The enzyme catalyses glycerol + ATP = sn-glycerol 3-phosphate + ADP + H(+). The protein operates within polyol metabolism; glycerol degradation via glycerol kinase pathway; sn-glycerol 3-phosphate from glycerol: step 1/1. Activated by phosphorylation and inhibited by fructose 1,6-bisphosphate (FBP). Key enzyme in the regulation of glycerol uptake and metabolism. Catalyzes the phosphorylation of glycerol to yield sn-glycerol 3-phosphate. This chain is Glycerol kinase, found in Streptococcus pneumoniae (strain ATCC 700669 / Spain 23F-1).